We begin with the raw amino-acid sequence, 254 residues long: Cell division protein DivIB (254 aa).

Over 1 to 21 the chain is Cytoplasmic; that stretch reads MPNAQIPVLKKNRTKKRTSRK. Residues 22 to 42 traverse the membrane as a helical segment; that stretch reads IAILLILLFIVLLAVLFFRSS. Residues 43 to 254 lie on the Extracellular side of the membrane; that stretch reads LSRVSEIRFD…EEGQEKDTTQ (212 aa). Positions 44–112 constitute a POTRA domain; that stretch reads SRVSEIRFDG…GIIAIHIKEF (69 aa).

Belongs to the FtsQ/DivIB family. DivIB subfamily.

It is found in the cell membrane. Functionally, cell division protein that may be involved in stabilizing or promoting the assembly of the division complex. The sequence is that of Cell division protein DivIB from Paenibacillus polymyxa (strain E681).